A 192-amino-acid chain; its full sequence is ATP synthase protein MI25 (192 aa).

The helical transmembrane segment at 29-49 (ILIYNEEMIVALCFIGFIIFS) threads the bilayer.

This sequence belongs to the ATPase protein MI25 family. In terms of assembly, F-type ATPases have 2 components, CF(1) - the catalytic core - and CF(0) - the membrane proton channel. CF(1) has five subunits: alpha(3), beta(3), gamma(1), delta(1), epsilon(1). CF(0) has three main subunits: a, b and c.

Its subcellular location is the mitochondrion membrane. This is one of the chains of the nonenzymatic component (CF(0) subunit) of the mitochondrial ATPase complex. This is ATP synthase protein MI25 (ATP4) from Arabidopsis thaliana (Mouse-ear cress).